The following is a 184-amino-acid chain: MIFGYARVSTDDQNLSLQIDALTHYGIDKLFQEKVTGAKKDRPQLEEMINLLREGDSVVIYKLDRISRSTKHLIELSELFEELSVNFISIQDNVDTSTSMGRFFFRVMASLAELERDIIIERTNSGLKAARVRGKKGGRPSKGKLSIDLALKMYDSKEYSIRQILDASKLSKTTFYRYLNKRNA.

Residues 1 to 134 (MIFGYARVST…SGLKAARVRG (134 aa)) form the Resolvase/invertase-type recombinase catalytic domain. Ser9 serves as the catalytic O-(5'-phospho-DNA)-serine intermediate. Positions 161–180 (IRQILDASKLSKTTFYRYLN) form a DNA-binding region, H-T-H motif.

Belongs to the site-specific recombinase resolvase family.

Functionally, resolvase catalyzes the resolution (a site-specific recombination) of the cointegrated replicon to yield the final transposition products. The sequence is that of Transposon Tn917 resolvase (tnpR) from Enterococcus faecalis (Streptococcus faecalis).